Consider the following 408-residue polypeptide: D-galactonate dehydratase family member OG2516_05608 (408 aa).

Asp-215 is a binding site for Mg(2+). D-arabinonate is bound at residue His-217. Mg(2+)-binding residues include Glu-241 and Glu-267. Positions 267, 288, 317, and 344 each coordinate D-arabinonate.

Belongs to the mandelate racemase/muconate lactonizing enzyme family. GalD subfamily.

Its function is as follows. Has no detectable activity with D-mannonate and with a panel of 70 other acid sugars (in vitro), in spite of the conservation of the residues that are expected to be important for catalytic activity and cofactor binding. May have evolved a divergent function. This chain is D-galactonate dehydratase family member OG2516_05608, found in Oceanicola granulosus (strain ATCC BAA-861 / DSM 15982 / KCTC 12143 / HTCC2516).